The chain runs to 67 residues: Major cold shock protein (67 aa).

The region spanning 4–63 (GTVKWFNAEKGFGFISTENGQDVFAHFSAIQTSGFKTLEEGQKVAFDVEEGQRGPQAVNI) is the CSD domain.

In terms of assembly, homodimer.

Its subcellular location is the cytoplasm. This is Major cold shock protein (cspA) from Streptococcus pyogenes serotype M6 (strain ATCC BAA-946 / MGAS10394).